The primary structure comprises 461 residues: Cysteine--tRNA ligase (461 aa).

Zn(2+) is bound at residue cysteine 28. The 'HIGH' region signature appears at isoleucine 30–histidine 40. Positions 209, 234, and 238 each coordinate Zn(2+). The short motif at lysine 266–serine 270 is the 'KMSKS' region element. Lysine 269 contacts ATP.

This sequence belongs to the class-I aminoacyl-tRNA synthetase family. As to quaternary structure, monomer. The cofactor is Zn(2+).

It localises to the cytoplasm. The enzyme catalyses tRNA(Cys) + L-cysteine + ATP = L-cysteinyl-tRNA(Cys) + AMP + diphosphate. This is Cysteine--tRNA ligase from Enterobacter sp. (strain 638).